A 346-amino-acid polypeptide reads, in one-letter code: MRLLFLAVLRPHTGNAVTAQRVRAHLEAAGHVCILKDAFDFESPSEIANLILAENCEAALALHLYRGGRLLQGHRIPFGVIFGGTDVNEDANQAEKNTVMGRVLEEARFAVAFTESMKEMAQVQWPHAKGKIYVQSQGIATTPNAAFNWNTFLQRSEINQSADNLHIFLLICGLRQVKDPLYLVDAFSEWHQEEPNVYLVILGPEVDPVFTREVKANVKRAAGVRLIGEMPQEDLHAVVKNCFAVVNSSVSEGMSAAILEAMDLEVPVLARNIPGNAAMVKHEVTGLLFSNPQEFVHLAKRLVSDPALEKEIVVNGKEYVRMYHSWQVERDTYQQLIRKLEGSTED.

The signal sequence occupies residues 1-16 (MRLLFLAVLRPHTGNA).

This sequence belongs to the glycosyltransferase group 1 family. Glycosyltransferase 4 subfamily.

It localises to the secreted. The protein is Glycosyltransferase 1 domain-containing protein 1 (GLT1D1) of Pongo abelii (Sumatran orangutan).